The primary structure comprises 697 residues: Glycine--tRNA ligase beta subunit (697 aa).

It belongs to the class-II aminoacyl-tRNA synthetase family. As to quaternary structure, tetramer of two alpha and two beta subunits.

It localises to the cytoplasm. The enzyme catalyses tRNA(Gly) + glycine + ATP = glycyl-tRNA(Gly) + AMP + diphosphate. The polypeptide is Glycine--tRNA ligase beta subunit (Cereibacter sphaeroides (strain ATCC 17029 / ATH 2.4.9) (Rhodobacter sphaeroides)).